We begin with the raw amino-acid sequence, 357 residues long: Neutral protease 2 homolog BDCG_00922 (357 aa).

The N-terminal stretch at 1–19 is a signal peptide; that stretch reads MRSPQSILAIVAFATTAIA. Residues 20–182 constitute a propeptide that is removed on maturation; it reads GVVPSTEKRA…FASLNQFSKR (163 aa). Cystine bridges form between Cys188-Cys259, Cys266-Cys284, and Cys297-Cys357. His308 is a binding site for Zn(2+). Residue Glu309 is part of the active site. Zn(2+)-binding residues include His312 and Asp323.

This sequence belongs to the peptidase M35 family. The cofactor is Zn(2+).

It is found in the secreted. It carries out the reaction Preferential cleavage of bonds with hydrophobic residues in P1'. Also 3-Asn-|-Gln-4 and 8-Gly-|-Ser-9 bonds in insulin B chain.. Functionally, secreted metalloproteinase that allows assimilation of proteinaceous substrates. Shows high activities on basic nuclear substrates such as histone and protamine. This chain is Neutral protease 2 homolog BDCG_00922, found in Ajellomyces dermatitidis (strain ER-3 / ATCC MYA-2586) (Blastomyces dermatitidis).